The sequence spans 365 residues: Phospho-N-acetylmuramoyl-pentapeptide-transferase (365 aa).

10 consecutive transmembrane segments (helical) span residues Y22–G42, T74–L94, T95–F115, K134–S154, S168–G188, G201–E221, L240–F260, V267–M287, L292–V312, and K342–I362.

It belongs to the glycosyltransferase 4 family. MraY subfamily. It depends on Mg(2+) as a cofactor.

The protein localises to the cell inner membrane. The catalysed reaction is UDP-N-acetyl-alpha-D-muramoyl-L-alanyl-gamma-D-glutamyl-meso-2,6-diaminopimeloyl-D-alanyl-D-alanine + di-trans,octa-cis-undecaprenyl phosphate = di-trans,octa-cis-undecaprenyl diphospho-N-acetyl-alpha-D-muramoyl-L-alanyl-D-glutamyl-meso-2,6-diaminopimeloyl-D-alanyl-D-alanine + UMP. Its pathway is cell wall biogenesis; peptidoglycan biosynthesis. In terms of biological role, catalyzes the initial step of the lipid cycle reactions in the biosynthesis of the cell wall peptidoglycan: transfers peptidoglycan precursor phospho-MurNAc-pentapeptide from UDP-MurNAc-pentapeptide onto the lipid carrier undecaprenyl phosphate, yielding undecaprenyl-pyrophosphoryl-MurNAc-pentapeptide, known as lipid I. This is Phospho-N-acetylmuramoyl-pentapeptide-transferase from Francisella tularensis subsp. holarctica (strain OSU18).